Reading from the N-terminus, the 238-residue chain is Androgen-induced gene 1 protein (238 aa).

At 1 to 12 (MALVPCQVLRMA) the chain is on the cytoplasmic side. A helical membrane pass occupies residues 13–30 (ILLSYCSILCNYKAIEMP). Over 31-44 (SHQTYGGSWKFLTF) the chain is Extracellular. A helical transmembrane segment spans residues 45–67 (IDLVIQAVFFGICVLTDLSSLLT). The Cytoplasmic portion of the chain corresponds to 68-87 (RGSGNQEQERQLKKLISLRD). Residues 88–110 (WMLAVLAFPVGVFVVAVFWIIYA) traverse the membrane as a helical segment. The Extracellular segment spans residues 111 to 124 (YDREMIYPKLLDNF). Residues 125-144 (IPGWLNHGMHTTVLPFILIE) form a helical membrane-spanning segment. Topologically, residues 145 to 156 (MRTSHHQYPSRS) are cytoplasmic. A helical membrane pass occupies residues 157 to 179 (SGLTAICTFSVGYILWVCWVHHV). The Extracellular portion of the chain corresponds to 180–193 (TGMWVYPFLEHIGP). The chain crosses the membrane as a helical span at residues 194 to 216 (GARIIFFGSTTILMNFLYLLGEV). Residues 217–238 (LNNYIWDTQKSMEEEKEKPKLE) lie on the Cytoplasmic side of the membrane.

It belongs to the AIG1 family. In terms of tissue distribution, highly expressed in heart, ovary, testis, liver, and kidney, at lower levels in spleen, prostate, brain, skeletal muscle, pancreas, small intestine and colon, and undetected in peripheral blood leukocytes, thymus, lung and placenta. AIG1 expression is higher in hair follicles from males than from females.

Its subcellular location is the cell membrane. The enzyme catalyses 9-hexadecanoyloxy-octadecanoate + H2O = 9-hydroxy-octadecanoate + hexadecanoate + H(+). It carries out the reaction 12-hexadecanoyloxy-octadecanoate + H2O = 12-hydroxyoctadecanoate + hexadecanoate + H(+). It catalyses the reaction 9-(9Z-hexadecenoyloxy)-octadecanoate + H2O = (9Z)-hexadecenoate + 9-hydroxy-octadecanoate + H(+). The catalysed reaction is 12-(9Z-hexadecenoyloxy)-octadecanoate + H2O = 12-hydroxyoctadecanoate + (9Z)-hexadecenoate + H(+). The enzyme catalyses 13-(9Z-hexadecenoyloxy)-octadecanoate + H2O = 13-hydroxy-octadecanoate + (9Z)-hexadecenoate + H(+). It carries out the reaction 9-octadecanoyloxy-octadecanoate + H2O = 9-hydroxy-octadecanoate + octadecanoate + H(+). It catalyses the reaction 12-octadecanoyloxy-octadecanoate + H2O = 12-hydroxyoctadecanoate + octadecanoate + H(+). The catalysed reaction is 13-octadecanoyloxy-octadecanoate + H2O = 13-hydroxy-octadecanoate + octadecanoate + H(+). The enzyme catalyses 9-(9Z-octadecenoyloxy)-octadecanoate + H2O = 9-hydroxy-octadecanoate + (9Z)-octadecenoate + H(+). It carries out the reaction 12-(9Z-octadecenoyloxy)-octadecanoate + H2O = 12-hydroxyoctadecanoate + (9Z)-octadecenoate + H(+). It catalyses the reaction 13-(9Z-octadecenoyloxy)-octadecanoate + H2O = 13-hydroxy-octadecanoate + (9Z)-octadecenoate + H(+). The catalysed reaction is 5-(9Z-hexadecenoyloxy)-octadecanoate + H2O = 5-hydroxy-octadecanoate + (9Z)-hexadecenoate + H(+). Its activity is regulated as follows. Inhibited by N-hydroxyhydantoin carbamate JJH260 and beta-lactone KC01. In terms of biological role, hydrolyzes bioactive fatty-acid esters of hydroxy-fatty acids (FAHFAs), but not other major classes of lipids. Show a preference for FAHFAs with branching distal from the carboxylate head group of the lipids. This is Androgen-induced gene 1 protein (AIG1) from Homo sapiens (Human).